We begin with the raw amino-acid sequence, 123 residues long: Protein Wnt-3a (123 aa).

The O-palmitoleoyl serine moiety is linked to residue Ser-1. A disulfide bond links Cys-89 and Cys-104. N-linked (GlcNAc...) asparagine glycosylation is present at Asn-90.

Belongs to the Wnt family. Post-translationally, disulfide bonds have critical and distinct roles in secretion and activity. Loss of each conserved cysteine results in high molecular weight oxidized Wnt oligomers, which are formed through inter-Wnt disulfide bonding. Palmitoleoylation is required for efficient binding to frizzled receptors. Depalmitoleoylation leads to Wnt signaling pathway inhibition.

The protein localises to the secreted. The protein resides in the extracellular space. It is found in the extracellular matrix. Functionally, ligand for members of the frizzled family of seven transmembrane receptors. Functions in the canonical Wnt signaling pathway that results in activation of transcription factors of the TCF/LEF family. Required for normal embryonic mesoderm development and formation of caudal somites. Required for normal morphogenesis of the developing neural tube. The chain is Protein Wnt-3a (WNT-3A) from Plethodon jordani (Red-cheeked salamander).